Consider the following 335-residue polypeptide: Deoxyhypusine hydroxylase (335 aa).

5 HEAT-like PBS-type repeats span residues 71–97, 104–130, 200–233, 238–264, and 271–298; these read LKHE…VVKD, CRHE…LRDN, QRYR…GLKD, FRHE…ALSD, and VRHE…FLND. Fe cation is bound by residues histidine 73, glutamate 74, histidine 106, and glutamate 107. The Fe cation site is built by histidine 240, glutamate 241, histidine 273, and glutamate 274.

Belongs to the deoxyhypusine hydroxylase family. The cofactor is Fe(2+).

It localises to the cytoplasm. It is found in the nucleus. It catalyses the reaction [eIF5A protein]-deoxyhypusine + AH2 + O2 = [eIF5A protein]-hypusine + A + H2O. Its pathway is protein modification; eIF5A hypusination. Its function is as follows. Catalyzes the hydroxylation of the N(6)-(4-aminobutyl)-L-lysine intermediate to form hypusine, an essential post-translational modification only found in mature eIF-5A factor. This chain is Deoxyhypusine hydroxylase (lia1), found in Aspergillus clavatus (strain ATCC 1007 / CBS 513.65 / DSM 816 / NCTC 3887 / NRRL 1 / QM 1276 / 107).